The following is a 367-amino-acid chain: UDP-N-acetylglucosamine--N-acetylmuramyl-(pentapeptide) pyrophosphoryl-undecaprenol N-acetylglucosamine transferase (367 aa).

UDP-N-acetyl-alpha-D-glucosamine-binding positions include 18–20 (TGG), Asn-130, Arg-170, Ser-196, Ile-252, 271–276 (ALTVSE), and Gln-297.

The protein belongs to the glycosyltransferase 28 family. MurG subfamily.

It is found in the cell inner membrane. It catalyses the reaction di-trans,octa-cis-undecaprenyl diphospho-N-acetyl-alpha-D-muramoyl-L-alanyl-D-glutamyl-meso-2,6-diaminopimeloyl-D-alanyl-D-alanine + UDP-N-acetyl-alpha-D-glucosamine = di-trans,octa-cis-undecaprenyl diphospho-[N-acetyl-alpha-D-glucosaminyl-(1-&gt;4)]-N-acetyl-alpha-D-muramoyl-L-alanyl-D-glutamyl-meso-2,6-diaminopimeloyl-D-alanyl-D-alanine + UDP + H(+). Its pathway is cell wall biogenesis; peptidoglycan biosynthesis. In terms of biological role, cell wall formation. Catalyzes the transfer of a GlcNAc subunit on undecaprenyl-pyrophosphoryl-MurNAc-pentapeptide (lipid intermediate I) to form undecaprenyl-pyrophosphoryl-MurNAc-(pentapeptide)GlcNAc (lipid intermediate II). This is UDP-N-acetylglucosamine--N-acetylmuramyl-(pentapeptide) pyrophosphoryl-undecaprenol N-acetylglucosamine transferase from Shewanella frigidimarina (strain NCIMB 400).